Consider the following 412-residue polypeptide: Acetate kinase (412 aa).

Asparagine 10 contributes to the Mg(2+) binding site. Lysine 17 serves as a coordination point for ATP. The interval 40-61 is disordered; it reads ETSRLAHTPSAGGGAEPRERTG. Arginine 95 is a binding site for substrate. The active-site Proton donor/acceptor is aspartate 152. ATP contacts are provided by residues 212 to 216, 286 to 288, and 334 to 338; these read HLGNG, DMR, and GVGEN. A Mg(2+)-binding site is contributed by glutamate 388.

This sequence belongs to the acetokinase family. As to quaternary structure, homodimer. Requires Mg(2+) as cofactor. Mn(2+) is required as a cofactor.

Its subcellular location is the cytoplasm. The catalysed reaction is acetate + ATP = acetyl phosphate + ADP. It participates in metabolic intermediate biosynthesis; acetyl-CoA biosynthesis; acetyl-CoA from acetate: step 1/2. Its function is as follows. Catalyzes the formation of acetyl phosphate from acetate and ATP. Can also catalyze the reverse reaction. This chain is Acetate kinase, found in Streptomyces griseus subsp. griseus (strain JCM 4626 / CBS 651.72 / NBRC 13350 / KCC S-0626 / ISP 5235).